A 538-amino-acid chain; its full sequence is Bifunctional purine biosynthesis protein PurH (538 aa).

One can recognise an MGS-like domain in the interval 8–158; sequence IPAPDKVEIK…KNHAYVTILT (151 aa).

This sequence belongs to the PurH family.

It catalyses the reaction (6R)-10-formyltetrahydrofolate + 5-amino-1-(5-phospho-beta-D-ribosyl)imidazole-4-carboxamide = 5-formamido-1-(5-phospho-D-ribosyl)imidazole-4-carboxamide + (6S)-5,6,7,8-tetrahydrofolate. It carries out the reaction IMP + H2O = 5-formamido-1-(5-phospho-D-ribosyl)imidazole-4-carboxamide. The protein operates within purine metabolism; IMP biosynthesis via de novo pathway; 5-formamido-1-(5-phospho-D-ribosyl)imidazole-4-carboxamide from 5-amino-1-(5-phospho-D-ribosyl)imidazole-4-carboxamide (10-formyl THF route): step 1/1. It participates in purine metabolism; IMP biosynthesis via de novo pathway; IMP from 5-formamido-1-(5-phospho-D-ribosyl)imidazole-4-carboxamide: step 1/1. The sequence is that of Bifunctional purine biosynthesis protein PurH from Rhizobium leguminosarum bv. trifolii (strain WSM2304).